A 67-amino-acid chain; its full sequence is Cell division protein ZapB (67 aa).

Residues 3-59 (LELLSKLETKIQAALETIELLKMELEEEKQTSSSLSEQNQQLQQELTSWNEKVTGLV) are a coiled coil.

Belongs to the ZapB family. Homodimer. The ends of the coiled-coil dimer bind to each other, forming polymers. Interacts with FtsZ.

It localises to the cytoplasm. Its function is as follows. Non-essential, abundant cell division factor that is required for proper Z-ring formation. It is recruited early to the divisome by direct interaction with FtsZ, stimulating Z-ring assembly and thereby promoting cell division earlier in the cell cycle. Its recruitment to the Z-ring requires functional FtsA or ZipA. The protein is Cell division protein ZapB of Shewanella halifaxensis (strain HAW-EB4).